The following is a 324-amino-acid chain: MKTAKIYQYQLPMDSGVILREQRLQQRDGLVIELSDGIHTARGEVAPLPEFSQETLEQAREDLISLTQSWLNNEELDLDSNCPSVAFGFSMALLELEKQLPQEGNYQAAPLCSGDPDDLVVKLNEMSGKKIAKIKVGLYEPIRDGMVVNMFLELISDLSLRLDANRGWTAKKAEQFANYVHPQFRSRIEFLEEPCATPEESLAFSKATDIAIAWDETVRDDGFTVKTQEGVTAIVIKPTLVGSVEKCISLIEQAHQLGMQAVISSSIESSLALTQLARLAAWKTPETIPGLDTIDLFKMQLDTSWPNCDLPVAQLADLEAIWEN.

The Proton donor role is filled by lysine 135. Mg(2+) contacts are provided by aspartate 163, glutamate 192, and aspartate 215. Lysine 237 functions as the Proton acceptor in the catalytic mechanism.

This sequence belongs to the mandelate racemase/muconate lactonizing enzyme family. MenC type 1 subfamily. It depends on a divalent metal cation as a cofactor.

It carries out the reaction (1R,6R)-6-hydroxy-2-succinyl-cyclohexa-2,4-diene-1-carboxylate = 2-succinylbenzoate + H2O. It functions in the pathway quinol/quinone metabolism; 1,4-dihydroxy-2-naphthoate biosynthesis; 1,4-dihydroxy-2-naphthoate from chorismate: step 4/7. It participates in quinol/quinone metabolism; menaquinone biosynthesis. Functionally, converts 2-succinyl-6-hydroxy-2,4-cyclohexadiene-1-carboxylate (SHCHC) to 2-succinylbenzoate (OSB). This chain is o-succinylbenzoate synthase, found in Aliivibrio fischeri (strain ATCC 700601 / ES114) (Vibrio fischeri).